Consider the following 427-residue polypeptide: Inward rectifier potassium channel 2 (427 aa).

The Cytoplasmic segment spans residues 1 to 81; it reads MGSVRTNRYS…IFTTCVDIRW (81 aa). At cysteine 76 the chain carries S-nitrosocysteine. The helical transmembrane segment at 82 to 106 threads the bilayer; it reads RWMLVIFCLAFVLSWLFFGCVFWLI. The Extracellular segment spans residues 107–128; sequence ALLHGDLDASKESKACVSEVNS. Positions 129–140 form an intramembrane region, helical; Pore-forming; that stretch reads FTAAFLFSIETQ. The pore-forming intramembrane region spans 141 to 147; that stretch reads TTIGYGF. The Selectivity filter signature appears at 142-147; the sequence is TIGYGF. The Extracellular segment spans residues 148–156; it reads RCVTDECPV. A helical membrane pass occupies residues 157–178; that stretch reads AVFMVVFQSIVGCIIDAFIIGA. Topologically, residues 179–427 are cytoplasmic; sequence VMAKMAKPKK…PRPLRRESEI (249 aa). The interval 181-208 is polyphosphoinositide (PIP2)-binding; it reads AKMAKPKKRNETLVFSHNAVIAMRDGKL. A disordered region spans residues 384–427; the sequence is SKEEDDSENGVPESTSTDTPPDIDLHNQASVPLEPRPLRRESEI. Residues 425–427 carry the PDZ-binding motif; it reads SEI.

It belongs to the inward rectifier-type potassium channel (TC 1.A.2.1) family. KCNJ2 subfamily. As to quaternary structure, homotetramer. Homomultimeric and heteromultimeric association with KCNJ4/Kir2.3. Can form heteromeric channels with Kir2.6/KCNJ18. Associates, via its PDZ-recognition domain, with a complex containing LIN7A, LIN7B, LIN7C, DLG1, CASK and APBA1. S-nitrosylation increases the open probability and inward rectifying currents.

It localises to the cell membrane. It is found in the sarcolemma. The protein localises to the T-tubule. It carries out the reaction K(+)(in) = K(+)(out). Activated by phosphatidylinositol 4,5 biphosphate (PtdIns(4,5)P2). Its function is as follows. Inward rectifier potassium channels are characterized by a greater tendency to allow potassium to flow into the cell rather than out of it. Their voltage dependence is regulated by the concentration of extracellular potassium; as external potassium is raised, the voltage range of the channel opening shifts to more positive voltages. The inward rectification is mainly due to the blockage of outward current by internal magnesium. Can be blocked by extracellular barium and cesium. Probably participates in establishing action potential waveform and excitability of neuronal and muscle tissues. The sequence is that of Inward rectifier potassium channel 2 (KCNJ2) from Bos taurus (Bovine).